We begin with the raw amino-acid sequence, 200 residues long: Protein C2-DOMAIN ABA-RELATED 5 (200 aa).

The region spanning 22-142 is the C2 domain; the sequence is VAGEKHKDRR…LKMHLHDLPS (121 aa). Ca(2+)-binding residues include Arg57, Asp58, Asp63, Asp109, Tyr110, Asp111, and Asp117.

The protein belongs to the plant CAR protein family. Binds to PYR/PYL/RCAR abscisic acid intracellular receptors in an ABA-independent manner, both at the plasma membrane and in the nucleus.

Its subcellular location is the cell membrane. It is found in the nucleus. Functionally, stimulates the GTPase/ATPase activities of Obg-like ATPases. Mediates the transient calcium-dependent interaction of PYR/PYL/RCAR abscisic acid (ABA) receptors with the plasma membrane and thus regulates ABA sensitivity. The polypeptide is Protein C2-DOMAIN ABA-RELATED 5 (Arabidopsis thaliana (Mouse-ear cress)).